The sequence spans 69 residues: MKNFVIFLIRLYQKYISPMKPRTCRFYPTCSQYSIEAISKYGLLKGGLMSIWRILRCNPFNPGGYDPVK.

This sequence belongs to the UPF0161 family.

Its subcellular location is the cell membrane. In terms of biological role, could be involved in insertion of integral membrane proteins into the membrane. The sequence is that of Putative membrane protein insertion efficiency factor from Caldanaerobacter subterraneus subsp. tengcongensis (strain DSM 15242 / JCM 11007 / NBRC 100824 / MB4) (Thermoanaerobacter tengcongensis).